Consider the following 764-residue polypeptide: 5-methyltetrahydropteroyltriglutamate--homocysteine methyltransferase (764 aa).

5-methyltetrahydropteroyltri-L-glutamate is bound by residues 16 to 19 and lysine 121; that span reads RELK. L-homocysteine is bound by residues 440–442 and glutamate 493; that span reads IGS. Residues 440–442 and glutamate 493 contribute to the L-methionine site; that span reads IGS. 5-methyltetrahydropteroyltri-L-glutamate-binding positions include 524-525 and tryptophan 570; that span reads RC. Aspartate 608 is an L-homocysteine binding site. Aspartate 608 is a binding site for L-methionine. Glutamate 614 lines the 5-methyltetrahydropteroyltri-L-glutamate pocket. Histidine 650, cysteine 652, and glutamate 674 together coordinate Zn(2+). Residue histidine 703 is the Proton donor of the active site. Cysteine 735 serves as a coordination point for Zn(2+).

This sequence belongs to the vitamin-B12 independent methionine synthase family. Zn(2+) serves as cofactor.

The enzyme catalyses 5-methyltetrahydropteroyltri-L-glutamate + L-homocysteine = tetrahydropteroyltri-L-glutamate + L-methionine. It participates in amino-acid biosynthesis; L-methionine biosynthesis via de novo pathway; L-methionine from L-homocysteine (MetE route): step 1/1. Its function is as follows. Catalyzes the transfer of a methyl group from 5-methyltetrahydrofolate to homocysteine resulting in methionine formation. The sequence is that of 5-methyltetrahydropteroyltriglutamate--homocysteine methyltransferase from Burkholderia lata (strain ATCC 17760 / DSM 23089 / LMG 22485 / NCIMB 9086 / R18194 / 383).